Reading from the N-terminus, the 235-residue chain is Probable septum site-determining protein MinC (235 aa).

The disordered stretch occupies residues 104 to 125 (KAVRPAPVEPATPSEPPQNANP). Residues 110–119 (PVEPATPSEP) are compositionally biased toward pro residues.

Belongs to the MinC family. In terms of assembly, interacts with MinD and FtsZ.

Functionally, cell division inhibitor that blocks the formation of polar Z ring septums. Rapidly oscillates between the poles of the cell to destabilize FtsZ filaments that have formed before they mature into polar Z rings. Prevents FtsZ polymerization. In Salmonella agona (strain SL483), this protein is Probable septum site-determining protein MinC.